Consider the following 252-residue polypeptide: Protein HEAT-INDUCED TAS1 TARGET 2 (252 aa).

Belongs to the heat induced plant HTT protein family. In terms of tissue distribution, expressed ubiquitously, including in seedlings, leaves, stems, inflorescences and siliques.

It localises to the cytoplasm. Its subcellular location is the nucleus. In terms of biological role, mediates both basal and acquired thermotolerance via HSFA1s-directed pathways (e.g. HSFA1A, HSFA1B, and HSFA1D). Triggers the expression of HSFA1A and HSFA1B. This chain is Protein HEAT-INDUCED TAS1 TARGET 2, found in Arabidopsis thaliana (Mouse-ear cress).